The sequence spans 372 residues: N-methyl-L-tryptophan oxidase (372 aa).

4-34 contributes to the FAD binding site; sequence DLIIIGSGSVGAAAGYYATRAGLNVLMTDAH. Cys308 bears the S-8alpha-FAD cysteine mark.

The protein belongs to the MSOX/MTOX family. MTOX subfamily. In terms of assembly, monomer. Requires FAD as cofactor.

The enzyme catalyses N(alpha)-methyl-L-tryptophan + O2 + H2O = L-tryptophan + formaldehyde + H2O2. Functionally, catalyzes the oxidative demethylation of N-methyl-L-tryptophan. This Escherichia coli O7:K1 (strain IAI39 / ExPEC) protein is N-methyl-L-tryptophan oxidase.